Reading from the N-terminus, the 692-residue chain is Penicillin-binding protein activator LpoA (692 aa).

Residues 1–26 (MLSSITVRTKSGRLIPLVLAATLLAA) form the signal peptide. Cysteine 27 carries N-palmitoyl cysteine lipidation. Residue cysteine 27 is the site of S-diacylglycerol cysteine attachment. 2 disordered regions span residues 297–316 (AAAA…AAAT) and 324–373 (VNAA…PDAH). Residues 332-363 (PSAQGTDAAAPAAPNDSAALPPLDAAGDPIAP) are compositionally biased toward low complexity.

It belongs to the LpoA family. Interacts with PBP1a.

The protein resides in the cell outer membrane. Its function is as follows. Regulator of peptidoglycan synthesis that is essential for the function of penicillin-binding protein 1A (PBP1a). The chain is Penicillin-binding protein activator LpoA from Edwardsiella piscicida.